We begin with the raw amino-acid sequence, 190 residues long: RRP15-like protein (190 aa).

Positions 1–11 (MSTKNRDRLVV) are enriched in basic and acidic residues. Disordered stretches follow at residues 1 to 69 (MSTK…TRKE) and 119 to 190 (QKTM…SDED). The segment covering 55-66 (QRKKKKVIKKLT) has biased composition (basic residues). Residues 59–84 (KKVIKKLTRKEQSLKHSVKEYRIKLA) adopt a coiled-coil conformation. Over residues 119–153 (QKTMSDAVKEKMTARDRKEARERFDGKNFDSDKFA) the composition is skewed to basic and acidic residues. Acidic residues predominate over residues 167 to 190 (GEEEDEQMNIGDDEIDAGNYSDED).

It belongs to the RRP15 family.

This is RRP15-like protein from Caenorhabditis briggsae.